The sequence spans 1322 residues: Flocculation protein FLO9 (1322 aa).

Residues 1–24 (MSLAHYCLLLAIVTLLGLTNVVSA) form the signal peptide. The PA14 domain occupies 74–249 (GGQTDISIDY…GTTVSDDFEG (176 aa)). N-linked (GlcNAc...) asparagine glycosylation is found at Asn135, Asn187, Asn203, Asn257, Asn262, and Asn270. The sugar recognition stretch occupies residues 197–240 (NGSPPDNITGTVYMYAGFYYPMKIVYSNAVAWGTLPISVTLPDG). 13 consecutive repeat copies span residues 278–322 (TTTE…STII), 323–367 (TTTE…TTAI), 368–412 (TTTE…TTAM), 413–457 (TTTQ…TTAM), 458–502 (TTTQ…TTAM), 503–547 (TTTQ…TTAM), 548–592 (TTTQ…TTAI), 593–637 (TTTE…TTAI), 638–682 (TTTQ…TTAM), 683–727 (TTTQ…TTAM), 728–772 (TTTQ…GLIS), 773–817 (TTTE…GLVT), and 818–862 (TTTE…ISSS). A 13 X 45 AA approximate tandem repeats, Thr-rich region spans residues 278–862 (TTTEPWTGTF…KTPTTAISSS (585 aa)). N-linked (GlcNAc...) asparagine glycosylation occurs at Asn329. 8 N-linked (GlcNAc...) asparagine glycosylation sites follow: Asn419, Asn464, Asn509, Asn554, Asn599, Asn644, Asn689, and Asn734. Disordered regions lie at residues 770-799 (LIST…NGQP) and 816-843 (VTTT…TNGQ). Composition is skewed to low complexity over residues 773–795 (TTTE…VTGT) and 817–840 (TTTT…ITGT). A glycan (N-linked (GlcNAc...) asparagine) is linked at Asn888. 3 tandem repeats follow at residues 892-906 (VISS…TSSL), 907-921 (VISS…TSSP), and 922-936 (VISS…ISST). The interval 892 to 936 (VISSSVISSSDTSSLVISSSVTSSLVTSSPVISSSFISSPVISST) is 3 X 15 AA approximate repeats, Ser-rich. Over residues 950–1001 (SVIPTSSSTSGSSESETGSASSASSSSSISSESPKSTYSSSSLPPVTSATTS) the composition is skewed to low complexity. Residues 950-1018 (SVIPTSSSTS…PPVTTTKTSE (69 aa)) are disordered. The segment covering 1002-1018 (QEITSSLPPVTTTKTSE) has biased composition (polar residues). Tandem repeats lie at residues 1013–1063 (TTKT…CPIS), 1085–1135 (TTET…CPIS), and 1136–1186 (TTES…RPQT). The segment at 1013–1186 (TTKTSEQTTL…TVYSTWRPQT (174 aa)) is 3 X 51 AA approximate repeats, Thr-rich. Polar residues predominate over residues 1186-1196 (TTNEQSVSSKM). Disordered stretches follow at residues 1186–1221 (TTNE…AAET) and 1256–1284 (SETG…ASSM). Over residues 1197–1221 (NSATSETTTNTGAAETTTSTGAAET) the composition is skewed to low complexity. Polar residues predominate over residues 1257–1284 (ETGNTKSLTSSGLSTMSQQPRSTPASSM). A lipid anchor (GPI-anchor amidated glycine) is attached at Gly1299. The propeptide at 1300-1322 (SANSLLAGSGLSVFIASLLLAII) is removed in mature form.

Belongs to the flocculin family. Post-translationally, the GPI-anchor is attached to the protein in the endoplasmic reticulum and serves to target the protein to the cell surface. There, the glucosamine-inositol phospholipid moiety is cleaved off and the GPI-modified mannoprotein is covalently attached via its lipidless GPI glycan remnant to the 1,6-beta-glucan of the outer cell wall layer.

The protein localises to the secreted. Its subcellular location is the cell wall. It is found in the membrane. Its function is as follows. Cell wall protein that participates directly in adhesive cell-cell interactions during yeast flocculation, a reversible, asexual and Ca(2+)-dependent process in which cells adhere to form aggregates (flocs) consisting of thousands of cells. The lectin-like protein sticks out of the cell wall of flocculent cells and selectively binds mannose residues in the cell walls of adjacent cells. In Saccharomyces cerevisiae (strain ATCC 204508 / S288c) (Baker's yeast), this protein is Flocculation protein FLO9 (FLO9).